A 338-amino-acid polypeptide reads, in one-letter code: Formamidase (338 aa).

The CN hydrolase domain maps to 14-257 (VGIGLVQLQL…NEIITAEVRP (244 aa)). E60 serves as the catalytic Proton acceptor. The Proton donor role is filled by K129. Residue C162 is the Nucleophile of the active site.

The protein belongs to the carbon-nitrogen hydrolase superfamily. Aliphatic amidase family.

The catalysed reaction is formamide + H2O = formate + NH4(+). Is an aliphatic amidase with a restricted substrate specificity, as it only hydrolyzes formamide. The protein is Formamidase of Allorhizobium ampelinum (strain ATCC BAA-846 / DSM 112012 / S4) (Agrobacterium vitis (strain S4)).